Reading from the N-terminus, the 563-residue chain is Arginine--tRNA ligase (563 aa).

The 'HIGH' region signature appears at 121–131 (PNIAKPFSIGH).

It belongs to the class-I aminoacyl-tRNA synthetase family. As to quaternary structure, monomer.

The protein localises to the cytoplasm. It catalyses the reaction tRNA(Arg) + L-arginine + ATP = L-arginyl-tRNA(Arg) + AMP + diphosphate. This is Arginine--tRNA ligase from Streptococcus pyogenes serotype M18 (strain MGAS8232).